The chain runs to 155 residues: Ribosomal RNA large subunit methyltransferase H (155 aa).

S-adenosyl-L-methionine is bound by residues L72, G103, and 122 to 127 (LSPLTL).

The protein belongs to the RNA methyltransferase RlmH family. As to quaternary structure, homodimer.

The protein resides in the cytoplasm. The catalysed reaction is pseudouridine(1915) in 23S rRNA + S-adenosyl-L-methionine = N(3)-methylpseudouridine(1915) in 23S rRNA + S-adenosyl-L-homocysteine + H(+). Its function is as follows. Specifically methylates the pseudouridine at position 1915 (m3Psi1915) in 23S rRNA. The chain is Ribosomal RNA large subunit methyltransferase H from Mannheimia succiniciproducens (strain KCTC 0769BP / MBEL55E).